Here is a 167-residue protein sequence, read N- to C-terminus: Photosystem I assembly protein Ycf3 (167 aa).

3 TPR repeats span residues 35–68, 72–105, and 120–153; these read AFTY…EIDP, SYIL…NPSL, and GEQA…APNN.

The protein belongs to the Ycf3 family.

The protein resides in the plastid. Its subcellular location is the chloroplast thylakoid membrane. Essential for the assembly of the photosystem I (PSI) complex. May act as a chaperone-like factor to guide the assembly of the PSI subunits. The chain is Photosystem I assembly protein Ycf3 from Zygnema circumcarinatum (Green alga).